A 274-amino-acid chain; its full sequence is Penicillin-insensitive murein endopeptidase (274 aa).

The first 19 residues, 1 to 19, serve as a signal peptide directing secretion; that stretch reads MKKTAIALLAWFVSSASLA. Disulfide bonds link cysteine 44-cysteine 265, cysteine 187-cysteine 235, and cysteine 216-cysteine 223. 6 residues coordinate Zn(2+): histidine 110, histidine 113, aspartate 120, aspartate 147, histidine 150, and histidine 211. The segment at 225-274 is disordered; that stretch reads DQPLPPPGDGCGAELQSWFEPPKPGTTKPEKKTPPPLPPSCQALLDEHVL.

Belongs to the peptidase M74 family. As to quaternary structure, dimer. Zn(2+) serves as cofactor.

The protein resides in the periplasm. Its function is as follows. Murein endopeptidase that cleaves the D-alanyl-meso-2,6-diamino-pimelyl amide bond that connects peptidoglycan strands. Likely plays a role in the removal of murein from the sacculus. The protein is Penicillin-insensitive murein endopeptidase of Salmonella arizonae (strain ATCC BAA-731 / CDC346-86 / RSK2980).